A 415-amino-acid chain; its full sequence is Palmitoyl-acyl carrier protein thioesterase, chloroplastic (415 aa).

2 stretches are compositionally biased toward low complexity: residues 1 to 16 (MVAT…LPSA) and 24 to 41 (KLGN…KSTP). A chloroplast-targeting transit peptide spans 1–60 (MVATAASSAFFPLPSADTSSRPGKLGNKPSSLSPLKPKSTPNGGLQVKANASAPPKINGS). The interval 1-81 (MVATAASSAF…QEDAHSAPPP (81 aa)) is disordered. Catalysis depends on residues Asn-314, His-316, and Cys-351.

The protein belongs to the acyl-ACP thioesterase family.

Its subcellular location is the plastid. The protein localises to the chloroplast. The catalysed reaction is hexadecanoyl-[ACP] + H2O = hexadecanoate + holo-[ACP] + H(+). Functionally, plays an essential role in chain termination during de novo fatty acid synthesis. High thioesterase activity for palmitoyl-ACP versus other acyl-ACPs. The polypeptide is Palmitoyl-acyl carrier protein thioesterase, chloroplastic (FATB1) (Cuphea hookeriana (Cigar plant)).